We begin with the raw amino-acid sequence, 581 residues long: Proline--tRNA ligase 1 (581 aa).

It belongs to the class-II aminoacyl-tRNA synthetase family. ProS type 1 subfamily. In terms of assembly, homodimer.

It localises to the cytoplasm. It carries out the reaction tRNA(Pro) + L-proline + ATP = L-prolyl-tRNA(Pro) + AMP + diphosphate. Functionally, catalyzes the attachment of proline to tRNA(Pro) in a two-step reaction: proline is first activated by ATP to form Pro-AMP and then transferred to the acceptor end of tRNA(Pro). As ProRS can inadvertently accommodate and process non-cognate amino acids such as alanine and cysteine, to avoid such errors it has two additional distinct editing activities against alanine. One activity is designated as 'pretransfer' editing and involves the tRNA(Pro)-independent hydrolysis of activated Ala-AMP. The other activity is designated 'posttransfer' editing and involves deacylation of mischarged Ala-tRNA(Pro). The misacylated Cys-tRNA(Pro) is not edited by ProRS. This chain is Proline--tRNA ligase 1, found in Rhodococcus jostii (strain RHA1).